A 901-amino-acid chain; its full sequence is MRILKIQTLRGPNYWSIRRHKLIVMRLDLETLAETPSNEIPGFYEGLVEALPSLEGHYCSPGCHGGFLMRVREGTMMGHIVEHVALELQELAGMHVGFGRTRETATPGIYQVVIEYLNEEAGRYAGRAAVRLCQSIVDRGRYPKAELEQDIQDLKDLWRDASLGPSTEAIVKEAEKRGIPWMQLSARFLIQLGYGVNHKRMQATMTDKTGILGVELACDKEATKRILAASGVPVPRGTVINFLDDLEEAIEYVGGYPIVIKPLDGNHGRGITIDIRSWEEAEAAYEAARQVSRSIIVERYYVGRDHRVLVVDGKVVAVAERVPAHVIGNGRSTVAELIEEINQDPNRGDGHDKVLTKIELDRTSYQLLERAGYTLNSVPPKGTICYLRATANLSTGGTAVDRTDEIHPENVWLAQRVVKIIGLDIAGLDIVTTDISRPLRELDGVIVEVNAAPGFRMHVAPSQGIPRNVAGAVMDMLFPNEQSGRIPILSVTGTNGKTTTTRLLAHIYKQTGKVVGYTTTDGTYIGDYLVESGDNTGPQSAHVILQDPTVEVAVLETARGGILRSGLGFESANVGVVLNVAADHLGIGDIDTIDQLANLKSVVAESVYPDGYAVLNADDRRVAAMAEKTKANIAYFTMNSESELVRKHIQKGGVAAVYENGYLSIVKGDWTHRIERAEQIPLTMGGRAPFMIANALAASLAAFVQNVSIEQIRAGLRTFRASVSQTPGRMNLFNLGNYHALVDYAHNPASYEAVGAFVRNWTSGQRIGVVGGPGDRRDEDFVTLGKLAAEIFDYIIVKEDDDTRGRPRGSASELITKGITQVKPDARYESILDETQAINKGLDMAPANGLVVILPESVSRAIKLIKLRGLVKEEIQQQNSSTTVIDNQNGVASSSVINTLL.

An ATP-grasp domain is found at 224–478 (KRILAASGVP…VAGAVMDMLF (255 aa)). 493-499 (GTNGKTT) contacts ATP.

In the C-terminal section; belongs to the MurCDEF family. In terms of assembly, homodimer.

The catalysed reaction is [L-4-(L-arginin-2-N-yl)aspartate](n) + L-aspartate + ATP = [L-4-(L-arginin-2-N-yl)aspartate](n)-L-aspartate + ADP + phosphate + H(+). It carries out the reaction [L-4-(L-arginin-2-N-yl)aspartate](n)-L-aspartate + L-arginine + ATP = [L-4-(L-arginin-2-N-yl)aspartate](n+1) + ADP + phosphate + H(+). Its function is as follows. Catalyzes the ATP-dependent polymerization of arginine and aspartate to multi-L-arginyl-poly-L-aspartic acid (cyanophycin; a water-insoluble reserve polymer). This is Cyanophycin synthetase (cphA) from Nostoc sp. (strain PCC 7120 / SAG 25.82 / UTEX 2576).